Reading from the N-terminus, the 1273-residue chain is DNA-directed RNA polymerase subunit beta (1273 aa).

This sequence belongs to the RNA polymerase beta chain family. The RNAP catalytic core consists of 2 alpha, 1 beta, 1 beta' and 1 omega subunit. When a sigma factor is associated with the core the holoenzyme is formed, which can initiate transcription.

It carries out the reaction RNA(n) + a ribonucleoside 5'-triphosphate = RNA(n+1) + diphosphate. DNA-dependent RNA polymerase catalyzes the transcription of DNA into RNA using the four ribonucleoside triphosphates as substrates. The sequence is that of DNA-directed RNA polymerase subunit beta from Onion yellows phytoplasma (strain OY-M).